Reading from the N-terminus, the 296-residue chain is GTPase Era (296 aa).

The 168-residue stretch at 3–170 folds into the Era-type G domain; the sequence is KSGFVTIVGR…KELMFKYIPE (168 aa). Positions 11–18 are G1; that stretch reads GRPNVGKS. 11–18 is a GTP binding site; it reads GRPNVGKS. The interval 37–41 is G2; sequence QTTRN. The G3 stretch occupies residues 58–61; sequence DTPG. GTP-binding positions include 58 to 62 and 120 to 123; these read DTPGI and NKID. The tract at residues 120-123 is G4; it reads NKID. The tract at residues 149–151 is G5; that stretch reads ISA. One can recognise a KH type-2 domain in the interval 201–278; sequence LSEEVPHGIA…YIRLWVKVKE (78 aa).

Belongs to the TRAFAC class TrmE-Era-EngA-EngB-Septin-like GTPase superfamily. Era GTPase family. Monomer.

The protein localises to the cytoplasm. The protein resides in the cell membrane. In terms of biological role, an essential GTPase that binds both GDP and GTP, with rapid nucleotide exchange. Plays a role in 16S rRNA processing and 30S ribosomal subunit biogenesis and possibly also in cell cycle regulation and energy metabolism. The sequence is that of GTPase Era from Clostridium botulinum (strain 657 / Type Ba4).